The primary structure comprises 156 residues: Small ribosomal subunit protein uS7 (156 aa).

It belongs to the universal ribosomal protein uS7 family. Part of the 30S ribosomal subunit. Contacts proteins S9 and S11.

In terms of biological role, one of the primary rRNA binding proteins, it binds directly to 16S rRNA where it nucleates assembly of the head domain of the 30S subunit. Is located at the subunit interface close to the decoding center, probably blocks exit of the E-site tRNA. This Chromobacterium violaceum (strain ATCC 12472 / DSM 30191 / JCM 1249 / CCUG 213 / NBRC 12614 / NCIMB 9131 / NCTC 9757 / MK) protein is Small ribosomal subunit protein uS7.